A 314-amino-acid chain; its full sequence is Porphobilinogen deaminase (314 aa).

At Cys-234 the chain carries S-(dipyrrolylmethanemethyl)cysteine.

Belongs to the HMBS family. Monomer. The cofactor is dipyrromethane.

It catalyses the reaction 4 porphobilinogen + H2O = hydroxymethylbilane + 4 NH4(+). The protein operates within porphyrin-containing compound metabolism; protoporphyrin-IX biosynthesis; coproporphyrinogen-III from 5-aminolevulinate: step 2/4. Its function is as follows. Tetrapolymerization of the monopyrrole PBG into the hydroxymethylbilane pre-uroporphyrinogen in several discrete steps. The sequence is that of Porphobilinogen deaminase from Mycobacterium marinum (strain ATCC BAA-535 / M).